A 174-amino-acid chain; its full sequence is Small ribosomal subunit protein bS16 (174 aa).

Residues 81–174 (QRFTGEPAPP…DATTDATPSA (94 aa)) form a disordered region. Positions 87–97 (PAPPPMKTAPP) are enriched in pro residues. A compositionally biased stretch (basic and acidic residues) spans 98 to 118 (KPDKKALFEAAAKEAAGEPRA). Positions 135-158 (ETTPAAEAAPDAAASADEPAGGAS) are enriched in low complexity. A compositionally biased stretch (polar residues) spans 160 to 174 (AAESQDATTDATPSA).

This sequence belongs to the bacterial ribosomal protein bS16 family.

In Acidothermus cellulolyticus (strain ATCC 43068 / DSM 8971 / 11B), this protein is Small ribosomal subunit protein bS16.